We begin with the raw amino-acid sequence, 481 residues long: Glutamate--tRNA ligase 2 (481 aa).

The 'HIGH' region motif lies at 17-27 (PSPTGFLHIGG). A compositionally biased stretch (basic and acidic residues) spans 118-139 (AEQRAKKQPQRYDGRWRDRDPS). The interval 118 to 143 (AEQRAKKQPQRYDGRWRDRDPSEAPA) is disordered. A 'KMSKS' region motif is present at residues 246–250 (KLSKR). Residue lysine 249 coordinates ATP.

This sequence belongs to the class-I aminoacyl-tRNA synthetase family. Glutamate--tRNA ligase type 1 subfamily. As to quaternary structure, monomer.

The protein localises to the cytoplasm. It catalyses the reaction tRNA(Glu) + L-glutamate + ATP = L-glutamyl-tRNA(Glu) + AMP + diphosphate. In terms of biological role, catalyzes the attachment of glutamate to tRNA(Glu) in a two-step reaction: glutamate is first activated by ATP to form Glu-AMP and then transferred to the acceptor end of tRNA(Glu). In Zymomonas mobilis subsp. mobilis (strain ATCC 31821 / ZM4 / CP4), this protein is Glutamate--tRNA ligase 2.